A 129-amino-acid chain; its full sequence is Lysozyme C (129 aa).

Residues K1–L129 enclose the C-type lysozyme domain. 4 disulfide bridges follow: C6/C127, C30/C115, C64/C80, and C76/C94. Residues E35 and D52 contribute to the active site.

This sequence belongs to the glycosyl hydrolase 22 family. Monomer.

It localises to the secreted. It carries out the reaction Hydrolysis of (1-&gt;4)-beta-linkages between N-acetylmuramic acid and N-acetyl-D-glucosamine residues in a peptidoglycan and between N-acetyl-D-glucosamine residues in chitodextrins.. Functionally, lysozymes have primarily a bacteriolytic function; those in tissues and body fluids are associated with the monocyte-macrophage system and enhance the activity of immunoagents. In Pavo cristatus (Indian peafowl), this protein is Lysozyme C (LYZ).